The following is an 84-amino-acid chain: MERGNRKTRIGRVVSDKMDKTIVVAVETKVRHPLYGKTVNKTTKFKAHDEKNEAKLNDRVQIMETRPLSKDKRWRLVEIVEKAK.

Belongs to the universal ribosomal protein uS17 family. As to quaternary structure, part of the 30S ribosomal subunit.

Functionally, one of the primary rRNA binding proteins, it binds specifically to the 5'-end of 16S ribosomal RNA. The protein is Small ribosomal subunit protein uS17 of Clostridium acetobutylicum (strain ATCC 824 / DSM 792 / JCM 1419 / IAM 19013 / LMG 5710 / NBRC 13948 / NRRL B-527 / VKM B-1787 / 2291 / W).